The chain runs to 287 residues: NAD-dependent protein deacylase sir-2.2 (287 aa).

Positions 10–287 constitute a Deacetylase sirtuin-type domain; sequence AELCENSLKK…YKISDVLKEM (278 aa). NAD(+) is bound by residues 35 to 55 and 116 to 119; these read GAGI…VGLY and QNVD. His-134 functions as the Proton acceptor in the catalytic mechanism. Zn(2+)-binding residues include Cys-142, Cys-145, Cys-196, and Cys-199. Residues 236-238, 262-264, and Ile-280 each bind NAD(+); these read GTS and NIG.

Belongs to the sirtuin family. Class II subfamily. As to quaternary structure, interacts with pyc-1, pcca-1 and mccc-1. Requires Zn(2+) as cofactor. As to expression, ubiquitously expressed with high expression in the pharynx, body wall muscles and gonad.

Its subcellular location is the mitochondrion matrix. The protein resides in the mitochondrion. It catalyses the reaction N(6)-acetyl-L-lysyl-[protein] + NAD(+) + H2O = 2''-O-acetyl-ADP-D-ribose + nicotinamide + L-lysyl-[protein]. NAD-dependent protein deacylase. Catalyzes the NAD-dependent hydrolysis of acyl groups from lysine residues. Plays a role in oxidative stress resistance. The protein is NAD-dependent protein deacylase sir-2.2 (sir-2.2) of Caenorhabditis elegans.